The following is a 430-amino-acid chain: UDP-N-acetylglucosamine 1-carboxyvinyltransferase 1 (430 aa).

Phosphoenolpyruvate is bound at residue 22-23 (KN). A UDP-N-acetyl-alpha-D-glucosamine-binding site is contributed by arginine 93. The active-site Proton donor is the cysteine 117. Cysteine 117 is subject to 2-(S-cysteinyl)pyruvic acid O-phosphothioketal. UDP-N-acetyl-alpha-D-glucosamine-binding positions include 122-126 (RPVDL), aspartate 305, and valine 327.

It belongs to the EPSP synthase family. MurA subfamily.

The protein resides in the cytoplasm. It catalyses the reaction phosphoenolpyruvate + UDP-N-acetyl-alpha-D-glucosamine = UDP-N-acetyl-3-O-(1-carboxyvinyl)-alpha-D-glucosamine + phosphate. Its pathway is cell wall biogenesis; peptidoglycan biosynthesis. Cell wall formation. Adds enolpyruvyl to UDP-N-acetylglucosamine. The protein is UDP-N-acetylglucosamine 1-carboxyvinyltransferase 1 of Listeria monocytogenes serovar 1/2a (strain ATCC BAA-679 / EGD-e).